Consider the following 475-residue polypeptide: UDP-N-acetylmuramate--L-alanine ligase (475 aa).

121–127 lines the ATP pocket; that stretch reads GTHGKTT.

This sequence belongs to the MurCDEF family.

Its subcellular location is the cytoplasm. The enzyme catalyses UDP-N-acetyl-alpha-D-muramate + L-alanine + ATP = UDP-N-acetyl-alpha-D-muramoyl-L-alanine + ADP + phosphate + H(+). It participates in cell wall biogenesis; peptidoglycan biosynthesis. In terms of biological role, cell wall formation. In Salinibacter ruber (strain DSM 13855 / M31), this protein is UDP-N-acetylmuramate--L-alanine ligase.